The chain runs to 156 residues: MDIQTFDHTKEENPKNLELITDILEFAGNYLHLDEETEISVTLMHNDEIHQINKEYRNVDRPTDVISFAINDADEDIIMDPEMAEEIPANIGDLMISVDKVAEQAEFLGHSYERELGFLCVHGFLHLNGYDHMEKEDQEKMFPLQKEIMNAYGLKR.

H122, H126, and H132 together coordinate Zn(2+).

Belongs to the endoribonuclease YbeY family. It depends on Zn(2+) as a cofactor.

Its subcellular location is the cytoplasm. Single strand-specific metallo-endoribonuclease involved in late-stage 70S ribosome quality control and in maturation of the 3' terminus of the 16S rRNA. In Pediococcus pentosaceus (strain ATCC 25745 / CCUG 21536 / LMG 10740 / 183-1w), this protein is Endoribonuclease YbeY.